Consider the following 340-residue polypeptide: Alpha-1,3-galactosyltransferase 2 (340 aa).

Over 1–12 (MALKEGLRAWKR) the chain is Cytoplasmic. The chain crosses the membrane as a helical; Signal-anchor for type II membrane protein span at residues 13 to 32 (IFWRQILLTLGLLGLFLYGL). At 33–340 (PKFRHLEALI…APKGYRLLRN (308 aa)) the chain is on the lumenal side. Asparagine 58 and asparagine 100 each carry an N-linked (GlcNAc...) asparagine glycan. The Mn(2+) site is built by aspartate 199 and aspartate 201.

The protein belongs to the glycosyltransferase 6 family. The cofactor is Mn(2+). Expressed in thymus and monocyte derived dendritic cells.

It is found in the golgi apparatus. The protein resides in the golgi stack membrane. The catalysed reaction is a beta-D-galactosyl-(1-&gt;4)-N-acetyl-beta-D-glucosaminyl derivative + UDP-alpha-D-galactose = an alpha-D-galactosyl-(1-&gt;3)-beta-D-galactosyl-(1-&gt;4)-N-acetyl-beta-D-glucosaminyl derivative + UDP + H(+). The enzyme catalyses a beta-D-Gal-(1-&gt;4)-beta-D-Glc-(1&lt;-&gt;1)-Cer(d18:1(4E)) + UDP-alpha-D-galactose = an isogloboside iGb3Cer (d18:1(4E)) + UDP + H(+). It carries out the reaction a globoside Gb3Cer + UDP-alpha-D-galactose = a globoside GalGb3Cer + UDP + H(+). Synthesizes the galactose-alpha(1,3)-galactose group on the glycosphingolipid isoglobotrihexosylceramide or isogloboside 3 (iGb3) by catalyzing the transfer of galactose from UDP-Galactose to its acceptor molecule Gal-beta-1,4-Glc-ceramide. Can also catalyze the addition of galactose to iGb3 itself to form polygalactose structures. The polypeptide is Alpha-1,3-galactosyltransferase 2 (Homo sapiens (Human)).